Reading from the N-terminus, the 460-residue chain is Diguanylate cyclase DosC (460 aa).

A heme-binding site is contributed by His98. The region spanning 325–458 (TPLSVLIIDV…GRNRVELWKA (134 aa)) is the GGDEF domain. Residue Asp333 coordinates Mg(2+). Asn341 and Asp350 together coordinate substrate. Asp376 is a binding site for Mg(2+). Asp376 functions as the Proton acceptor in the catalytic mechanism.

Heme is required as a cofactor. Requires Mg(2+) as cofactor.

It catalyses the reaction 2 GTP = 3',3'-c-di-GMP + 2 diphosphate. It participates in purine metabolism; 3',5'-cyclic di-GMP biosynthesis. Globin-coupled heme-based oxygen sensor protein displaying diguanylate cyclase (DGC) activity in response to oxygen availability. Thus, catalyzes the synthesis of cyclic diguanylate (c-di-GMP) via the condensation of 2 GTP molecules. Cyclic-di-GMP is a second messenger which controls cell surface-associated traits in bacteria. In Shigella boydii serotype 4 (strain Sb227), this protein is Diguanylate cyclase DosC (dosC).